Consider the following 57-residue polypeptide: MNFLQNFCRSKFIVFERVTPFTHKIIHKHSHHQTSSFNPMPSEVSLHTSHNFPHTTF.

Residues 31-57 (HHQTSSFNPMPSEVSLHTSHNFPHTTF) are disordered. The segment covering 33–57 (QTSSFNPMPSEVSLHTSHNFPHTTF) has biased composition (polar residues).

This is an uncharacterized protein from Invertebrate iridescent virus 6 (IIV-6).